The chain runs to 572 residues: Squalene monooxygenase (572 aa).

Residues 1–19 (MWTFLGIATFTYFYKKCGD) lie on the Cytoplasmic side of the membrane. The segment at 1 to 98 (MWTFLGIATF…EQLESKKCRK (98 aa)) is interaction with MARCHF6. The stretch at 20–40 (VTLANKELLLCVLVFLSLGLV) is an intramembrane region. At 41 to 572 (LSYRCRHRHG…IYSEMKYLVH (532 aa)) the chain is on the cytoplasmic side. Residues 61–72 (QFAAFSDILSAL) are required for degradation in response to high membrane cholesterol levels. The sufficient for enzyme activity stretch occupies residues 116–572 (TSFVTDPEVI…IYSEMKYLVH (457 aa)). FAD is bound by residues 131 to 132 (VL), 151 to 152 (ER), Arg-159, Arg-232, Val-248, Asp-406, and Met-419. The segment at 514–572 (PLVLIRHFFSVAIYATYFCFKSEPWATKPRALFSSGAVLYKACSILFPLIYSEMKYLVH) is hydrophobic; mediates interaction with membranes.

Belongs to the squalene monooxygenase family. Interacts (via N-terminal domain) with MARCHF6. Interacts with SMIM22; this interaction modulates lipid droplet formation. It depends on FAD as a cofactor. Ubiquitinated by MARCHF6 in response to high cholesterol levels in intracellular membranes, leading to proteasomal degradation. Detected in liver.

It is found in the microsome membrane. Its subcellular location is the endoplasmic reticulum membrane. It carries out the reaction squalene + reduced [NADPH--hemoprotein reductase] + O2 = (S)-2,3-epoxysqualene + oxidized [NADPH--hemoprotein reductase] + H2O + H(+). Its pathway is terpene metabolism; lanosterol biosynthesis; lanosterol from farnesyl diphosphate: step 2/3. Catalyzes the stereospecific oxidation of squalene to (S)-2,3-epoxysqualene, and is considered to be a rate-limiting enzyme in steroid biosynthesis. The protein is Squalene monooxygenase (Sqle) of Mus musculus (Mouse).